Consider the following 580-residue polypeptide: Formate--tetrahydrofolate ligase (580 aa).

Position 83–90 (83–90) interacts with ATP; the sequence is TPMGEGKT.

This sequence belongs to the formate--tetrahydrofolate ligase family.

It carries out the reaction (6S)-5,6,7,8-tetrahydrofolate + formate + ATP = (6R)-10-formyltetrahydrofolate + ADP + phosphate. Its pathway is one-carbon metabolism; tetrahydrofolate interconversion. This Haloquadratum walsbyi (strain DSM 16790 / HBSQ001) protein is Formate--tetrahydrofolate ligase.